Here is a 153-residue protein sequence, read N- to C-terminus: NAD(P)H-quinone oxidoreductase subunit N (153 aa).

This sequence belongs to the complex I NdhN subunit family. NDH-1 can be composed of about 15 different subunits; different subcomplexes with different compositions have been identified which probably have different functions.

It is found in the cellular thylakoid membrane. The enzyme catalyses a plastoquinone + NADH + (n+1) H(+)(in) = a plastoquinol + NAD(+) + n H(+)(out). It catalyses the reaction a plastoquinone + NADPH + (n+1) H(+)(in) = a plastoquinol + NADP(+) + n H(+)(out). Its function is as follows. NDH-1 shuttles electrons from an unknown electron donor, via FMN and iron-sulfur (Fe-S) centers, to quinones in the respiratory and/or the photosynthetic chain. The immediate electron acceptor for the enzyme in this species is believed to be plastoquinone. Couples the redox reaction to proton translocation, and thus conserves the redox energy in a proton gradient. Cyanobacterial NDH-1 also plays a role in inorganic carbon-concentration. The chain is NAD(P)H-quinone oxidoreductase subunit N from Synechococcus sp. (strain WH7803).